We begin with the raw amino-acid sequence, 575 residues long: Sclareol synthase, chloroplastic (575 aa).

The transit peptide at 1–51 (MSLAFNVGVTPFSGQRVGSRKEKFPVQGFPVTTPNRSRLIVNCSLTTIDFM) directs the protein to the chloroplast. 5 residues coordinate Mg(2+): D329, D333, N473, S477, and E481. The DDXXD motif signature appears at 329–333 (DDFFD).

Belongs to the terpene synthase family.

Its subcellular location is the plastid. It localises to the chloroplast. It carries out the reaction 8-hydroxycopalyl diphosphate + H2O = sclareol + diphosphate. It participates in secondary metabolite biosynthesis; terpenoid biosynthesis. Involved in the biosynthesis of labdane-type diterpenoid including sclareol, a diterpene-diol that is used as fragrance and flavoring, and has anticancer effects (able to kill leukemic and colon cancer cells by apoptosis). Sclareol can also be used as synthesis precursor of ambergris substitution fragance products such as ambrox. Terpene synthase that catalyzes the conversion of 8-hydroxy-copalyl diphosphate to sclareol. This Salvia sclarea (Clary sage) protein is Sclareol synthase, chloroplastic.